The sequence spans 624 residues: Phosphoenolpyruvate carboxykinase (ATP) 1 (624 aa).

Residues Met-1–Val-22 are disordered. Gly-322–Thr-329 contributes to the ATP binding site.

It belongs to the phosphoenolpyruvate carboxykinase (ATP) family. Homohexamer. As to expression, green leaves but not in roots or etiolated shoots.

It is found in the cytoplasm. The enzyme catalyses oxaloacetate + ATP = phosphoenolpyruvate + ADP + CO2. It participates in carbohydrate biosynthesis; gluconeogenesis. The chain is Phosphoenolpyruvate carboxykinase (ATP) 1 (PCK1) from Urochloa panicoides (Panic liverseed grass).